A 241-amino-acid polypeptide reads, in one-letter code: Small ribosomal subunit protein uS2 (241 aa).

This sequence belongs to the universal ribosomal protein uS2 family.

This chain is Small ribosomal subunit protein uS2, found in Escherichia coli (strain 55989 / EAEC).